A 369-amino-acid chain; its full sequence is MAGGEVVAVAAAAAGTSRTVLVTGGAGYIGSHTVLQLLAAGFRVVVADSLGNSSELAVRRVAALAGDKARNLSLHKVDIRDKGGLEKVFSSTRFDAVVHFAGLKAVGESVQKPLLYYDHNVAGTIILLEVMAAHGCKKLVFSSSAAVYGSPKNSPCTEEFPLTPHNPYGRTKLIAEEICRDIYHSDSEWSIILLRYFNPVGAHPSGYLGEDPCGIPNNLMPFVQQVAVGRRPSLTIFGNDYATKDGTGVRDYIHVVDLAEGHIAALRKLFESSIGCQAYNLGTGKGTSVLEIVNAFEKVSGKKIPLVIGPRRPGDAEILFSSAAKAEREFKWKAKYGIEEMCRDQWNWASKNPFGYASPDSTKQNGHSH.

Residue 19 to 50 (TVLVTGGAGYIGSHTVLQLLAAGFRVVVADSL) coordinates NAD(+). Ser-144 contacts substrate. Tyr-168 functions as the Proton acceptor in the catalytic mechanism.

It belongs to the NAD(P)-dependent epimerase/dehydratase family. NAD(+) is required as a cofactor.

It catalyses the reaction UDP-alpha-D-glucose = UDP-alpha-D-galactose. Its pathway is carbohydrate metabolism; galactose metabolism. Catalyzes the interconversion between UDP-glucose and UDP-galactose. The protein is UDP-glucose 4-epimerase 4 (UGE-4) of Oryza sativa subsp. japonica (Rice).